The sequence spans 90 residues: Albumin-1 (90 aa).

Ala1 is a signal peptide. Cystine bridges form between Cys4/Cys21, Cys8/Cys23, and Cys16/Cys34. A propeptide spanning residues 40-47 is cleaved from the precursor; it reads LSSVAKMI.

Post-translationally, the C-terminal glycine may be removed from A1b.

A1b binds to basic 7S globulin (BG) and stimulates its phosphorylation activity. In Phaseolus angularis (Azuki bean), this protein is Albumin-1 (LEG).